The following is a 334-amino-acid chain: Holliday junction branch migration complex subunit RuvB (334 aa).

Positions 4-184 are large ATPase domain (RuvB-L); sequence ADRIISASPQ…FGIVQRLEFY (181 aa). ATP contacts are provided by residues isoleucine 23, arginine 24, glycine 65, lysine 68, threonine 69, threonine 70, 131 to 133, arginine 174, tyrosine 184, and arginine 221; that span reads EDY. Position 69 (threonine 69) interacts with Mg(2+). A small ATPAse domain (RuvB-S) region spans residues 185 to 255; the sequence is NVDDLTSIVK…IAKQALVMLD (71 aa). The interval 258 to 334 is head domain (RuvB-H); it reads PQGFDFMDIK…YAHLGISLSE (77 aa). 3 residues coordinate DNA: arginine 294, arginine 313, and arginine 318.

This sequence belongs to the RuvB family. In terms of assembly, homohexamer. Forms an RuvA(8)-RuvB(12)-Holliday junction (HJ) complex. HJ DNA is sandwiched between 2 RuvA tetramers; dsDNA enters through RuvA and exits via RuvB. An RuvB hexamer assembles on each DNA strand where it exits the tetramer. Each RuvB hexamer is contacted by two RuvA subunits (via domain III) on 2 adjacent RuvB subunits; this complex drives branch migration. In the full resolvosome a probable DNA-RuvA(4)-RuvB(12)-RuvC(2) complex forms which resolves the HJ.

It localises to the cytoplasm. It carries out the reaction ATP + H2O = ADP + phosphate + H(+). The RuvA-RuvB-RuvC complex processes Holliday junction (HJ) DNA during genetic recombination and DNA repair, while the RuvA-RuvB complex plays an important role in the rescue of blocked DNA replication forks via replication fork reversal (RFR). RuvA specifically binds to HJ cruciform DNA, conferring on it an open structure. The RuvB hexamer acts as an ATP-dependent pump, pulling dsDNA into and through the RuvAB complex. RuvB forms 2 homohexamers on either side of HJ DNA bound by 1 or 2 RuvA tetramers; 4 subunits per hexamer contact DNA at a time. Coordinated motions by a converter formed by DNA-disengaged RuvB subunits stimulates ATP hydrolysis and nucleotide exchange. Immobilization of the converter enables RuvB to convert the ATP-contained energy into a lever motion, pulling 2 nucleotides of DNA out of the RuvA tetramer per ATP hydrolyzed, thus driving DNA branch migration. The RuvB motors rotate together with the DNA substrate, which together with the progressing nucleotide cycle form the mechanistic basis for DNA recombination by continuous HJ branch migration. Branch migration allows RuvC to scan DNA until it finds its consensus sequence, where it cleaves and resolves cruciform DNA. The protein is Holliday junction branch migration complex subunit RuvB of Haemophilus ducreyi (strain 35000HP / ATCC 700724).